Here is a 434-residue protein sequence, read N- to C-terminus: Enolase (434 aa).

Gln-163 contacts (2R)-2-phosphoglycerate. The Proton donor role is filled by Glu-205. Mg(2+)-binding residues include Asp-242, Glu-291, and Asp-318. Residues Lys-343, Arg-372, Ser-373, and Lys-394 each contribute to the (2R)-2-phosphoglycerate site. Lys-343 serves as the catalytic Proton acceptor.

It belongs to the enolase family. Mg(2+) serves as cofactor.

It is found in the cytoplasm. The protein localises to the secreted. The protein resides in the cell surface. It catalyses the reaction (2R)-2-phosphoglycerate = phosphoenolpyruvate + H2O. It functions in the pathway carbohydrate degradation; glycolysis; pyruvate from D-glyceraldehyde 3-phosphate: step 4/5. Functionally, catalyzes the reversible conversion of 2-phosphoglycerate (2-PG) into phosphoenolpyruvate (PEP). It is essential for the degradation of carbohydrates via glycolysis. The chain is Enolase from Streptococcus gordonii (strain Challis / ATCC 35105 / BCRC 15272 / CH1 / DL1 / V288).